Reading from the N-terminus, the 122-residue chain is RxLR effector protein Avh52 (122 aa).

An N-terminal signal peptide occupies residues 1–21; sequence MRLTSILVLVIAATFHTTGTA. The RxLR-dEER motif lies at 50–68; that stretch reads RLLRRVEKDKVDYEQDEQR. Residues 69–86 form a TAP1-binding region; that stretch reads SFGALKDAVKKLNPVTAV. The tract at residues 87–98 is nuclear localization signal (NLS); the sequence is KKFFKQRARRKK.

It belongs to the RxLR effector family. Interacts with host acetyl transferase TAP1.

The protein localises to the secreted. The protein resides in the host nucleus. Its function is as follows. Effector that suppresses plant defense responses during the early stages of pathogen infection. Suppresses cell death induced by effectors and PAMPs in plant hosts. Interacts with host acetyltransferase TAP1 and causes TAP1 relocation into the nucleus where it acetylates histones H2A and H3 during early infection, thereby promoting susceptibility of host plant to P.sojae. This is RxLR effector protein Avh52 from Phytophthora sojae (Soybean stem and root rot agent).